Reading from the N-terminus, the 583-residue chain is Isocitrate dehydrogenase kinase/phosphatase (583 aa).

ATP-binding positions include 315 to 321 and lysine 336; that span reads APGIRGM. The active site involves aspartate 371.

This sequence belongs to the AceK family.

The protein resides in the cytoplasm. The catalysed reaction is L-seryl-[isocitrate dehydrogenase] + ATP = O-phospho-L-seryl-[isocitrate dehydrogenase] + ADP + H(+). Functionally, bifunctional enzyme which can phosphorylate or dephosphorylate isocitrate dehydrogenase (IDH) on a specific serine residue. This is a regulatory mechanism which enables bacteria to bypass the Krebs cycle via the glyoxylate shunt in response to the source of carbon. When bacteria are grown on glucose, IDH is fully active and unphosphorylated, but when grown on acetate or ethanol, the activity of IDH declines drastically concomitant with its phosphorylation. This Salmonella enteritidis PT4 (strain P125109) protein is Isocitrate dehydrogenase kinase/phosphatase.